The sequence spans 786 residues: LPS-assembly protein LptD (786 aa).

The N-terminal stretch at 1–24 is a signal peptide; that stretch reads MKKRIPTLLATMIASALYSHQGLA. 2 disulfide bridges follow: Cys31–Cys726 and Cys173–Cys727.

It belongs to the LptD family. Component of the lipopolysaccharide transport and assembly complex. Interacts with LptE and LptA. Post-translationally, contains two intramolecular disulfide bonds.

The protein resides in the cell outer membrane. In terms of biological role, together with LptE, is involved in the assembly of lipopolysaccharide (LPS) at the surface of the outer membrane. This Salmonella choleraesuis (strain SC-B67) protein is LPS-assembly protein LptD.